The following is a 357-amino-acid chain: MRHLPFHGMPLRVQMFCAFFIRSETTDKNKATPTITFMVSCCFVWVKRLFYRVGRIHHVQSLTYARPITALDSCLYVCCGYGEKLQPVGFVKSYVTNSQLDTLRVLLVGKDGAVYVHHMRAARLCRLASSTTEFTRRGLQRDAVTYEEDLELPDQRMCGTNARHLFDVIAAAADEHNLLTVGGLCQTHAGVSCNLLETVGDPWTAVPAARMTLTVPQVQYRLWPEARRDLRRHLYAGHPLGPWLVCGVLSRERETQKPSPPIRTTVGNVPTPGPREVEIAWVVLTLAGPLLAFWPDTGKICRLANSFSTLWKMGPRAMRGHWTYSAPGRHLPGDAWPLCEHVRPQVGKLPRKRAYLD.

The tract at residues 107 to 187 (LVGKDGAVYV…LLTVGGLCQT (81 aa)) is interaction with host p53.

Belongs to the herpesviridae US22 family. Interacts with host p53 and inhibits p53-activated transcription.

Its function is as follows. Involved in transactivation. Displays transforming activity. The polypeptide is Transactivator protein DR7 (DR7L) (Homo sapiens (Human)).